A 178-amino-acid polypeptide reads, in one-letter code: Large ribosomal subunit protein uL10 (178 aa).

This sequence belongs to the universal ribosomal protein uL10 family. As to quaternary structure, part of the ribosomal stalk of the 50S ribosomal subunit. The N-terminus interacts with L11 and the large rRNA to form the base of the stalk. The C-terminus forms an elongated spine to which L12 dimers bind in a sequential fashion forming a multimeric L10(L12)X complex.

Functionally, forms part of the ribosomal stalk, playing a central role in the interaction of the ribosome with GTP-bound translation factors. The protein is Large ribosomal subunit protein uL10 of Gloeothece citriformis (strain PCC 7424) (Cyanothece sp. (strain PCC 7424)).